The following is a 681-amino-acid chain: Chaperone protein htpG (681 aa).

Positions 1-326 (MQKGNIGVTT…SPDIPLNVSR (326 aa)) are a; substrate-binding. The interval 327–545 (SYLQSDSNVK…YMRRMKEMAN (219 aa)) is b. The interval 546–681 (IQAGMSFYGE…NFVKRSIELI (136 aa)) is c.

It belongs to the heat shock protein 90 family. In terms of assembly, homodimer.

The protein resides in the cytoplasm. Molecular chaperone. Has ATPase activity. The sequence is that of Chaperone protein htpG from Bacteroides fragilis (strain YCH46).